Consider the following 134-residue polypeptide: uncharacterized protein (134 aa).

A signal peptide spans 1–26; that stretch reads MRLYKAMALCLPLVVICTSEVSQSTA. The tract at residues 77–98 is disordered; that stretch reads GEKNEEVAGPVDGEGSEEEAFD.

This is an uncharacterized protein from Encephalitozoon cuniculi (strain GB-M1) (Microsporidian parasite).